The primary structure comprises 212 residues: MHILVTGFAPFDNQNINPSWEAVTQLEDIIGTHTIDKLKLPTSFKKVDNIINKTLASNHYDVVLAIGQAGGRNAITPERVAINIDDARIPDNDDFQPIDQAIHLDGAPAYFSNLPVKAMTQSIINQGLPGALSNSAGTYVCNHVLYHLGYLQDKHYPHLRFGFIHVPYIPEQVIGKPDTPSMPLEKIVAGLTAAIEAISNDEDLRIALGTTE.

Active-site residues include glutamate 78, cysteine 141, and histidine 165.

The protein belongs to the peptidase C15 family. As to quaternary structure, homotetramer.

Its subcellular location is the cytoplasm. It carries out the reaction Release of an N-terminal pyroglutamyl group from a polypeptide, the second amino acid generally not being Pro.. Its function is as follows. Removes 5-oxoproline from various penultimate amino acid residues except L-proline. The chain is Pyrrolidone-carboxylate peptidase from Staphylococcus aureus (strain Mu3 / ATCC 700698).